We begin with the raw amino-acid sequence, 248 residues long: Proteasome subunit alpha (248 aa).

The protein belongs to the peptidase T1A family. In terms of assembly, the 20S proteasome core is composed of 14 alpha and 14 beta subunits that assemble into four stacked heptameric rings, resulting in a barrel-shaped structure. The two inner rings, each composed of seven catalytic beta subunits, are sandwiched by two outer rings, each composed of seven alpha subunits. The catalytic chamber with the active sites is on the inside of the barrel. Has a gated structure, the ends of the cylinder being occluded by the N-termini of the alpha-subunits. Is capped at one or both ends by the proteasome regulatory ATPase, PAN.

The protein localises to the cytoplasm. The formation of the proteasomal ATPase PAN-20S proteasome complex, via the docking of the C-termini of PAN into the intersubunit pockets in the alpha-rings, triggers opening of the gate for substrate entry. Interconversion between the open-gate and close-gate conformations leads to a dynamic regulation of the 20S proteasome proteolysis activity. Functionally, component of the proteasome core, a large protease complex with broad specificity involved in protein degradation. The polypeptide is Proteasome subunit alpha (Methanothermobacter thermautotrophicus (strain ATCC 29096 / DSM 1053 / JCM 10044 / NBRC 100330 / Delta H) (Methanobacterium thermoautotrophicum)).